A 64-amino-acid chain; its full sequence is Large ribosomal subunit protein bL28 (64 aa).

The tract at residues 1–26 (MARRDQLTGKGPLSGNTRSHAMNHSK) is disordered.

The protein belongs to the bacterial ribosomal protein bL28 family.

The sequence is that of Large ribosomal subunit protein bL28 from Ureaplasma urealyticum serovar 10 (strain ATCC 33699 / Western).